The following is a 181-amino-acid chain: Crossover junction endodeoxyribonuclease RuvC (181 aa).

Catalysis depends on residues Asp8, Glu67, and Asp139. Mg(2+) contacts are provided by Asp8, Glu67, and Asp139.

This sequence belongs to the RuvC family. Homodimer which binds Holliday junction (HJ) DNA. The HJ becomes 2-fold symmetrical on binding to RuvC with unstacked arms; it has a different conformation from HJ DNA in complex with RuvA. In the full resolvosome a probable DNA-RuvA(4)-RuvB(12)-RuvC(2) complex forms which resolves the HJ. Requires Mg(2+) as cofactor.

It is found in the cytoplasm. It carries out the reaction Endonucleolytic cleavage at a junction such as a reciprocal single-stranded crossover between two homologous DNA duplexes (Holliday junction).. Its function is as follows. The RuvA-RuvB-RuvC complex processes Holliday junction (HJ) DNA during genetic recombination and DNA repair. Endonuclease that resolves HJ intermediates. Cleaves cruciform DNA by making single-stranded nicks across the HJ at symmetrical positions within the homologous arms, yielding a 5'-phosphate and a 3'-hydroxyl group; requires a central core of homology in the junction. The consensus cleavage sequence is 5'-(A/T)TT(C/G)-3'. Cleavage occurs on the 3'-side of the TT dinucleotide at the point of strand exchange. HJ branch migration catalyzed by RuvA-RuvB allows RuvC to scan DNA until it finds its consensus sequence, where it cleaves and resolves the cruciform DNA. The protein is Crossover junction endodeoxyribonuclease RuvC of Acinetobacter baylyi (strain ATCC 33305 / BD413 / ADP1).